Reading from the N-terminus, the 53-residue chain is UPF0391 membrane protein azo1750 (53 aa).

The next 2 helical transmembrane spans lie at 6 to 26 (VIFL…IAAG) and 30 to 50 (IAKI…VLGM).

The protein belongs to the UPF0391 family.

Its subcellular location is the cell membrane. The protein is UPF0391 membrane protein azo1750 of Azoarcus sp. (strain BH72).